We begin with the raw amino-acid sequence, 800 residues long: Putative antiporter subunit mnhA2 (800 aa).

Transmembrane regions (helical) follow at residues 1–21 (MSLV…LLMS), 33–53 (IALV…PSVA), 78–98 (GLSL…FFYA), 118–138 (LFMF…MYIF), 167–187 (FMIT…LYIM), 207–227 (GLFI…SAQF), 241–261 (TPVS…FLLL), 273–293 (YVYI…ITAL), 300–320 (GILA…VGIG), 331–351 (IASI…NHAI), 387–407 (LVMT…GFLS), 424–444 (FSLI…VFTF), 472–492 (PWLF…IFFV), 527–547 (GFNI…VLAI), 595–615 (IIMT…RIGL), 627–647 (GALE…LIFI), 651–671 (LTMV…FIAM), 676–696 (LALT…VSFS), 712–732 (IIKI…IFIT), and 768–788 (LDTL…YTLL).

It belongs to the CPA3 antiporters (TC 2.A.63) subunit A family. May form a heterooligomeric complex that consists of seven subunits: mnhA2, mnhB2, mnhC2, mnhD2, mnhE2, mnhF2 and mnhG2.

The protein resides in the cell membrane. In Staphylococcus aureus (strain USA300), this protein is Putative antiporter subunit mnhA2 (mnhA2).